Reading from the N-terminus, the 303-residue chain is tRNA pseudouridine synthase B (303 aa).

Asp-47 acts as the Nucleophile in catalysis.

This sequence belongs to the pseudouridine synthase TruB family. Type 1 subfamily.

The catalysed reaction is uridine(55) in tRNA = pseudouridine(55) in tRNA. Responsible for synthesis of pseudouridine from uracil-55 in the psi GC loop of transfer RNAs. The protein is tRNA pseudouridine synthase B of Legionella pneumophila subsp. pneumophila (strain Philadelphia 1 / ATCC 33152 / DSM 7513).